The primary structure comprises 325 residues: Glutarate 2-hydroxylase (325 aa).

Residues histidine 160, aspartate 162, and histidine 292 each contribute to the Fe cation site.

Belongs to the glutarate hydroxylase family. In terms of assembly, homotetramer. The cofactor is Fe(2+).

The catalysed reaction is glutarate + 2-oxoglutarate + O2 = (S)-2-hydroxyglutarate + succinate + CO2. It participates in amino-acid degradation. Its function is as follows. Acts as an alpha-ketoglutarate-dependent dioxygenase catalyzing hydroxylation of glutarate (GA) to L-2-hydroxyglutarate (L2HG). Functions in a L-lysine degradation pathway that proceeds via cadaverine, glutarate and L-2-hydroxyglutarate. Is extremely specific for glutarate, but it can use both 2-oxoglutarate and 2-oxoadipate (2OA) as a cosubstrate for L2HG formation. This chain is Glutarate 2-hydroxylase, found in Pseudomonas putida (strain ATCC 47054 / DSM 6125 / CFBP 8728 / NCIMB 11950 / KT2440).